Here is a 146-residue protein sequence, read N- to C-terminus: Hemoglobin subunit beta (146 aa).

Val-1 is subject to N-acetylvaline. The Globin domain maps to 2-146 (HLTAEEKNAI…VANALAHKYH (145 aa)). A Phosphothreonine modification is found at Thr-12. Position 59 is an N6-acetyllysine (Lys-59). His-63 serves as a coordination point for heme b. At Lys-82 the chain carries N6-acetyllysine. Position 92 (His-92) interacts with heme b. Cys-93 carries the post-translational modification S-nitrosocysteine. Lys-144 is subject to N6-acetyllysine.

The protein belongs to the globin family. As to quaternary structure, heterotetramer of two alpha chains and two beta chains. In terms of tissue distribution, red blood cells.

Functionally, involved in oxygen transport from the lung to the various peripheral tissues. This is Hemoglobin subunit beta (HBB) from Osphranter rufus (Red kangaroo).